Reading from the N-terminus, the 1486-residue chain is Chromosome partition protein MukB (1486 aa).

Residue glycine 34–serine 41 participates in ATP binding. 3 coiled-coil regions span residues serine 334–glutamine 418, leucine 444–glutamine 480, and arginine 509–valine 603. The flexible hinge stretch occupies residues proline 666–arginine 783. Coiled coils occupy residues glutamate 835–glutamate 923, glutamate 977–alanine 1115, and valine 1209–serine 1266.

This sequence belongs to the SMC family. MukB subfamily. As to quaternary structure, homodimerization via its hinge domain. Binds to DNA via its C-terminal region. Interacts, and probably forms a ternary complex, with MukE and MukF via its C-terminal region. The complex formation is stimulated by calcium or magnesium. Interacts with tubulin-related protein FtsZ.

It localises to the cytoplasm. The protein localises to the nucleoid. Functionally, plays a central role in chromosome condensation, segregation and cell cycle progression. Functions as a homodimer, which is essential for chromosome partition. Involved in negative DNA supercoiling in vivo, and by this means organize and compact chromosomes. May achieve or facilitate chromosome segregation by condensation DNA from both sides of a centrally located replisome during cell division. This is Chromosome partition protein MukB from Shigella sonnei (strain Ss046).